The primary structure comprises 262 residues: Type III pantothenate kinase (262 aa).

An ATP-binding site is contributed by 9–16; sequence DSGNTRVK. Residues Tyr-93 and 100 to 103 contribute to the substrate site; that span reads GSDR. The active-site Proton acceptor is Asp-102. Residue Asp-122 participates in K(+) binding. ATP is bound at residue Thr-125. Thr-175 contributes to the substrate binding site.

Belongs to the type III pantothenate kinase family. As to quaternary structure, homodimer. NH4(+) is required as a cofactor. The cofactor is K(+).

The protein resides in the cytoplasm. The catalysed reaction is (R)-pantothenate + ATP = (R)-4'-phosphopantothenate + ADP + H(+). Its pathway is cofactor biosynthesis; coenzyme A biosynthesis; CoA from (R)-pantothenate: step 1/5. Catalyzes the phosphorylation of pantothenate (Pan), the first step in CoA biosynthesis. In Nitrosospira multiformis (strain ATCC 25196 / NCIMB 11849 / C 71), this protein is Type III pantothenate kinase.